The following is a 103-amino-acid chain: UPF0235 protein RHECIAT_CH0004196 (103 aa).

The protein belongs to the UPF0235 family.

The chain is UPF0235 protein RHECIAT_CH0004196 from Rhizobium etli (strain CIAT 652).